The sequence spans 299 residues: Probable lipid kinase YegS (299 aa).

A DAGKc domain is found at 2 to 133 (AEFPASLLIL…IDMAQVNKQT (132 aa)). ATP-binding positions include threonine 40, 66 to 72 (GDGTINE), and threonine 95. Mg(2+) is bound by residues leucine 215, aspartate 218, and leucine 220. Residue glutamate 271 is the Proton acceptor of the active site.

It belongs to the diacylglycerol/lipid kinase family. YegS lipid kinase subfamily. Mg(2+) is required as a cofactor. It depends on Ca(2+) as a cofactor.

The protein localises to the cytoplasm. Its function is as follows. Probably phosphorylates lipids; the in vivo substrate is unknown. The chain is Probable lipid kinase YegS from Escherichia coli (strain K12 / MC4100 / BW2952).